Here is a 328-residue protein sequence, read N- to C-terminus: MPLHNLTRFPRLEFIGAPTPLEYLPRFSDYLGREIFIKRDDVTPMAMGGNKLRKLEFLAADALREGADTLITAGAIQSNHVRQTAAVAAKLGLHCVALLENPIGTTAENYLTNGNRLLLDLFNTQIEMCDALTDPNTQLEELATRVEAQGFRPYVIPVGGSNALGALGYVESALEIAQQCEGAVNISSVVVASGSAGTHAGLAVGLEHLMPESELIGVTVSRSVADQLPKVVNLQQAIAKELELTASAEILLWDDYFAPGYGVPNDEGMEAVKLLARLEGILLDPVYTGKAMAGLIDGISQKRFKDEGPILFIHTGGAPALFAYHPHV.

Residue Lys-51 is modified to N6-(pyridoxal phosphate)lysine.

This sequence belongs to the ACC deaminase/D-cysteine desulfhydrase family. Homodimer. Pyridoxal 5'-phosphate is required as a cofactor.

It catalyses the reaction D-cysteine + H2O = hydrogen sulfide + pyruvate + NH4(+) + H(+). Catalyzes the alpha,beta-elimination reaction of D-cysteine and of several D-cysteine derivatives. It could be a defense mechanism against D-cysteine. This chain is D-cysteine desulfhydrase, found in Escherichia coli (strain UTI89 / UPEC).